Consider the following 240-residue polypeptide: Protein OXIDATIVE STRESS 3 LIKE 4 (240 aa).

The tract at residues 1–128 (MELMAKPTFS…SKSFGNLGEI (128 aa)) is disordered. Residues 51–66 (WSGQTADYSSDSSSIG) show a composition bias toward polar residues. Over residues 70-84 (DSEEDEEESENENDD) the composition is skewed to acidic residues. The Nuclear localization signal motif lies at 142-150 (NKRRRLQIC). The segment at 163 to 207 (NPKSMPLLPVNEDEDDDDEDDDEEDLKSGFDENKSSSDEEGVKKV) is disordered. The segment covering 173-187 (NEDEDDDDEDDDEED) has biased composition (acidic residues). Residues 188-205 (LKSGFDENKSSSDEEGVK) are compositionally biased toward basic and acidic residues. The tract at residues 202–229 (EGVKKVVVRKGSFKNRAYKSRSCFALSD) is kinase-inducible domain (KID). Ser-213 is subject to Phosphoserine.

Interacts with HDA19; Ser-213 is critical for this interaction.

Its subcellular location is the nucleus. Functionally, transcription activator which may regulates gene expression through interaction with the histone deacetylase HDA19. Promotes slightly the tolerance to cadmium (Cd) and to oxidizing chemicals (e.g. diamide and tert-butyl hydroperoxide (t-BOOH)). The polypeptide is Protein OXIDATIVE STRESS 3 LIKE 4 (Arabidopsis thaliana (Mouse-ear cress)).